Consider the following 401-residue polypeptide: Putative TRAP transporter large permease protein HI_0050 (401 aa).

11 helical membrane passes run 31–51 (FPLMAIPFFMLTGEIMKHGGI), 70–90 (LGYVAIISGLIFAGLSGSAVA), 115–135 (GLICAAGIISVVIPPSIPMII), 144–164 (ITKLFMGGTVPGLLMVVGLWV), 193–213 (AFWPLLLPIIIIVGLRGGIFT), 217–237 (AGVVAAIYAGIVSIAYKGLTF), 253–273 (MVMFVAASAMISAFAITVAQI), 290–310 (ILMFIIMLFLLLVGCVMDLIP), 330–350 (IAYFGIMMVINLSIGLITPPV), 353–373 (VLYVGSGISKLGIGALSKGIA), and 375–395 (FLFVYAIIMMLIVFFPEIVIV).

Belongs to the TRAP transporter large permease family.

It is found in the cell inner membrane. In Haemophilus influenzae (strain ATCC 51907 / DSM 11121 / KW20 / Rd), this protein is Putative TRAP transporter large permease protein HI_0050.